The sequence spans 282 residues: Reaction center protein L chain (282 aa).

Transmembrane regions (helical) follow at residues 33-56 (GFFG…GAAM), 85-113 (GLWQ…RKLG), and 116-141 (FHIP…MMMG). (7R,8Z)-bacteriochlorophyll b contacts are provided by His154 and His174. Residues 171–200 (NPFHMLGISLFFTTAWALAMHGALVLSAAN) form a helical membrane-spanning segment. His191 provides a ligand contact to Fe cation. A ubiquinone is bound at residue Phe217. The helical transmembrane segment at 226 to 252 (GTLGIHRLGLLLALNAVFWSACCMLVS) threads the bilayer. His231 contributes to the Fe cation binding site.

Belongs to the reaction center PufL/M/PsbA/D family. Reaction center is composed of four bacteriochlorophylls, two bacteriopheophytins, two ubiquinones, one iron, and three highly hydrophobic polypeptide chains (designated L, M, and H).

Its subcellular location is the cellular chromatophore membrane. Functionally, the reaction center is a membrane-bound complex that mediates the initial photochemical event in the electron transfer process of photosynthesis. This chain is Reaction center protein L chain (pufL), found in Rhodobacter capsulatus (Rhodopseudomonas capsulata).